Reading from the N-terminus, the 239-residue chain is Probable transcriptional regulatory protein BAA_0622 (239 aa).

It belongs to the TACO1 family. YeeN subfamily.

The protein resides in the cytoplasm. The chain is Probable transcriptional regulatory protein BAA_0622 from Bacillus anthracis (strain A0248).